We begin with the raw amino-acid sequence, 113 residues long: Mitochondrial import inner membrane translocase subunit tim16 (113 aa).

The tract at residues K56–K108 is J-like.

The protein belongs to the TIM16/PAM16 family. Probable component of the PAM complex at least composed of a mitochondrial HSP70 protein, grepE, tim16 and tim14. Associates with the TIM23 complex.

It is found in the mitochondrion inner membrane. Regulates ATP-dependent protein translocation into the mitochondrial matrix. This is Mitochondrial import inner membrane translocase subunit tim16 (timm16) from Dictyostelium discoideum (Social amoeba).